The chain runs to 539 residues: GMP synthase [glutamine-hydrolyzing] (539 aa).

One can recognise a Glutamine amidotransferase type-1 domain in the interval 4 to 202 (KILILDFGSQ…VLGICRAKAD (199 aa)). Cys81 acts as the Nucleophile in catalysis. Catalysis depends on residues His176 and Glu178. Residues 203–395 (WVMKDHIEEA…LGLPPEMVYR (193 aa)) form the GMPS ATP-PPase domain. Residue 230–236 (SGGVDSS) participates in ATP binding.

Homodimer.

It carries out the reaction XMP + L-glutamine + ATP + H2O = GMP + L-glutamate + AMP + diphosphate + 2 H(+). The protein operates within purine metabolism; GMP biosynthesis; GMP from XMP (L-Gln route): step 1/1. Functionally, catalyzes the synthesis of GMP from XMP. This is GMP synthase [glutamine-hydrolyzing] from Cupriavidus pinatubonensis (strain JMP 134 / LMG 1197) (Cupriavidus necator (strain JMP 134)).